Reading from the N-terminus, the 371-residue chain is tRNA-specific 2-thiouridylase MnmA (371 aa).

ATP-binding positions include glycine 13 to serine 20 and methionine 39. The interaction with target base in tRNA stretch occupies residues asparagine 99–aspartate 101. Residue cysteine 104 is the Nucleophile of the active site. An intrachain disulfide couples cysteine 104 to cysteine 200. Glycine 128 serves as a coordination point for ATP. Positions lysine 150–glutamine 152 are interaction with tRNA. The active-site Cysteine persulfide intermediate is the cysteine 200. The interaction with tRNA stretch occupies residues arginine 309 to tyrosine 310.

This sequence belongs to the MnmA/TRMU family.

It localises to the cytoplasm. It catalyses the reaction S-sulfanyl-L-cysteinyl-[protein] + uridine(34) in tRNA + AH2 + ATP = 2-thiouridine(34) in tRNA + L-cysteinyl-[protein] + A + AMP + diphosphate + H(+). In terms of biological role, catalyzes the 2-thiolation of uridine at the wobble position (U34) of tRNA, leading to the formation of s(2)U34. The polypeptide is tRNA-specific 2-thiouridylase MnmA (Bacillus velezensis (strain DSM 23117 / BGSC 10A6 / LMG 26770 / FZB42) (Bacillus amyloliquefaciens subsp. plantarum)).